Reading from the N-terminus, the 403-residue chain is Tryptophan synthase beta chain (403 aa).

N6-(pyridoxal phosphate)lysine is present on Lys-88.

The protein belongs to the TrpB family. As to quaternary structure, tetramer of two alpha and two beta chains. The cofactor is pyridoxal 5'-phosphate.

It catalyses the reaction (1S,2R)-1-C-(indol-3-yl)glycerol 3-phosphate + L-serine = D-glyceraldehyde 3-phosphate + L-tryptophan + H2O. It participates in amino-acid biosynthesis; L-tryptophan biosynthesis; L-tryptophan from chorismate: step 5/5. The beta subunit is responsible for the synthesis of L-tryptophan from indole and L-serine. The chain is Tryptophan synthase beta chain from Shewanella frigidimarina (strain NCIMB 400).